The following is a 122-amino-acid chain: Large ribosomal subunit protein bL17 (122 aa).

Belongs to the bacterial ribosomal protein bL17 family. Part of the 50S ribosomal subunit. Contacts protein L32.

The polypeptide is Large ribosomal subunit protein bL17 (Staphylococcus carnosus (strain TM300)).